The following is a 215-amino-acid chain: Translation initiation factor 6 (215 aa).

This sequence belongs to the eIF-6 family.

Binds to the 50S ribosomal subunit and prevents its association with the 30S ribosomal subunit to form the 70S initiation complex. This is Translation initiation factor 6 from Archaeoglobus fulgidus (strain ATCC 49558 / DSM 4304 / JCM 9628 / NBRC 100126 / VC-16).